The chain runs to 461 residues: SWM histone demethylase complex subunit phf1 (461 aa).

The disordered stretch occupies residues 79–130 (PYGGMTMPASSSSGATSVPPEQDPSLSVSFNRLPKSASTKTKNGRIRSSRRE). Over residues 102–119 (PSLSVSFNRLPKSASTKT) the composition is skewed to polar residues. A PHD-type zinc finger spans residues 190 to 246 (VTLCSVCQRGHSPLSNRIVFCDGCNSPYHQLCHHPPIDDATVQDVDAEWFCMKCQYR).

In terms of assembly, component of the SWM histone demethylase complex composed of at least lsd1, lsd2, phf1 and phf2.

It is found in the nucleus. Functionally, component of the SWM histone demethylase complex that specifically demethylates H3K9me2, a specific tag for epigenetic transcriptional activation, thereby acting as a corepressor. Has a role in regulating heterochromatin propagation and euchromatic transcription. The protein is SWM histone demethylase complex subunit phf1 (phf1) of Schizosaccharomyces pombe (strain 972 / ATCC 24843) (Fission yeast).